The following is a 197-amino-acid chain: Probable nicotinate-nucleotide adenylyltransferase (197 aa).

The protein belongs to the NadD family.

The enzyme catalyses nicotinate beta-D-ribonucleotide + ATP + H(+) = deamido-NAD(+) + diphosphate. The protein operates within cofactor biosynthesis; NAD(+) biosynthesis; deamido-NAD(+) from nicotinate D-ribonucleotide: step 1/1. In terms of biological role, catalyzes the reversible adenylation of nicotinate mononucleotide (NaMN) to nicotinic acid adenine dinucleotide (NaAD). This chain is Probable nicotinate-nucleotide adenylyltransferase, found in Bordetella pertussis (strain Tohama I / ATCC BAA-589 / NCTC 13251).